Consider the following 222-residue polypeptide: Thiamine-phosphate synthase (222 aa).

Residues 44–48 (QFREK) and Asn-79 contribute to the 4-amino-2-methyl-5-(diphosphooxymethyl)pyrimidine site. Mg(2+) contacts are provided by Asp-80 and Asp-99. 4-amino-2-methyl-5-(diphosphooxymethyl)pyrimidine is bound at residue Ser-117. Position 143 to 145 (143 to 145 (TET)) interacts with 2-[(2R,5Z)-2-carboxy-4-methylthiazol-5(2H)-ylidene]ethyl phosphate. Position 146 (Lys-146) interacts with 4-amino-2-methyl-5-(diphosphooxymethyl)pyrimidine. Residues Gly-175 and 195–196 (IS) each bind 2-[(2R,5Z)-2-carboxy-4-methylthiazol-5(2H)-ylidene]ethyl phosphate.

Belongs to the thiamine-phosphate synthase family. Monomer. Mg(2+) serves as cofactor.

It carries out the reaction 2-[(2R,5Z)-2-carboxy-4-methylthiazol-5(2H)-ylidene]ethyl phosphate + 4-amino-2-methyl-5-(diphosphooxymethyl)pyrimidine + 2 H(+) = thiamine phosphate + CO2 + diphosphate. It catalyses the reaction 2-(2-carboxy-4-methylthiazol-5-yl)ethyl phosphate + 4-amino-2-methyl-5-(diphosphooxymethyl)pyrimidine + 2 H(+) = thiamine phosphate + CO2 + diphosphate. The enzyme catalyses 4-methyl-5-(2-phosphooxyethyl)-thiazole + 4-amino-2-methyl-5-(diphosphooxymethyl)pyrimidine + H(+) = thiamine phosphate + diphosphate. The protein operates within cofactor biosynthesis; thiamine diphosphate biosynthesis; thiamine phosphate from 4-amino-2-methyl-5-diphosphomethylpyrimidine and 4-methyl-5-(2-phosphoethyl)-thiazole: step 1/1. In terms of biological role, condenses 4-methyl-5-(beta-hydroxyethyl)thiazole monophosphate (THZ-P) and 2-methyl-4-amino-5-hydroxymethyl pyrimidine pyrophosphate (HMP-PP) to form thiamine monophosphate (TMP). Is also able to use the 2-methoxy analog MeO-HMP-PP, as substrate in vitro, but not the 2-trifluoromethyl analog CF(3)-HMP-PP. The chain is Thiamine-phosphate synthase (thiE) from Bacillus subtilis (strain 168).